The sequence spans 217 residues: N-(5'-phosphoribosyl)anthranilate isomerase (217 aa).

Belongs to the TrpF family.

The enzyme catalyses N-(5-phospho-beta-D-ribosyl)anthranilate = 1-(2-carboxyphenylamino)-1-deoxy-D-ribulose 5-phosphate. It functions in the pathway amino-acid biosynthesis; L-tryptophan biosynthesis; L-tryptophan from chorismate: step 3/5. This chain is N-(5'-phosphoribosyl)anthranilate isomerase, found in Acaryochloris marina (strain MBIC 11017).